A 131-amino-acid chain; its full sequence is Profilin-1 (131 aa).

Cys13 and Cys115 are joined by a disulfide. Residues Ala81–Thr97 carry the Involved in PIP2 interaction motif. Thr111 is subject to Phosphothreonine.

It belongs to the profilin family. Multimer. Occurs in many kinds of cells as a complex with monomeric actin in a 1:1 ratio. In terms of processing, phosphorylated by MAP kinases. As to expression, pollen specific.

It is found in the cytoplasm. It localises to the cytoskeleton. Functionally, binds to actin and affects the structure of the cytoskeleton. At high concentrations, profilin prevents the polymerization of actin, whereas it enhances it at low concentrations. By binding to PIP2, it inhibits the formation of IP3 and DG. The sequence is that of Profilin-1 (PRO1) from Zea mays (Maize).